Consider the following 277-residue polypeptide: GATA transcription factor 15 (277 aa).

The interval 52–94 (AYDDHSTVTTSPSSPSSSSTGSVDCTLSLGTPSSRRAEPVAAA) is disordered. A compositionally biased stretch (low complexity) spans 58–74 (TVTTSPSSPSSSSTGSV). Residues 154–179 (CANCGTASTPLWRNGPRGPKSLCNAC) form a GATA-type zinc finger.

This sequence belongs to the type IV zinc-finger family. Class B subfamily.

In terms of biological role, probable transcription factor that regulates organogenesis during transition from the vegetative to the reproductive phase. Regulates the expression of CYP78A11/PLA1, HD3A and MADS1 during reproductive development in rice. May act upstream of CYP78A11/PLA1 during panicle development. Acts independently of the photoperiodic and gibberellin signaling pathways. The sequence is that of GATA transcription factor 15 from Oryza sativa subsp. indica (Rice).